A 93-amino-acid chain; its full sequence is Alpha-defensin 1 (93 aa).

Residues 1 to 19 (MKKLVLLFALVLLGFQVQA) form the signal peptide. A propeptide spanning residues 20–58 (DSIQNTDEETKTEEQPGEEDQAVSVSFGDPEGTSLQEES) is cleaved from the precursor. Residues 24–54 (NTDEETKTEEQPGEEDQAVSVSFGDPEGTSL) form a disordered region. Intrachain disulfides connect C64-C92, C66-C81, and C71-C91.

This sequence belongs to the alpha-defensin family. Paneth cells of the small bowel.

The protein localises to the secreted. In terms of biological role, probably contributes to the antimicrobial barrier function of the small bowel mucosa. Has antibacterial activity against attenuated mutants of S.typhimurium. The protein is Alpha-defensin 1 (Defa1) of Mus musculus (Mouse).